Consider the following 283-residue polypeptide: Nopaline-binding periplasmic protein (283 aa).

The first 25 residues, 1–25, serve as a signal peptide directing secretion; sequence MKFFNLNALAAVVTGVLLAAGPTQA. A disulfide bridge connects residues cysteine 63 and cysteine 70.

Belongs to the bacterial solute-binding protein 3 family.

The protein localises to the periplasm. In terms of biological role, component of the nopaline active transport system probably consisting of four subunits: Q, M, P and T. This system is also capable of transporting octopine provided that catabolic functions are induced with nopaline. The polypeptide is Nopaline-binding periplasmic protein (nocT) (Agrobacterium fabrum (strain C58 / ATCC 33970) (Agrobacterium tumefaciens (strain C58))).